The sequence spans 621 residues: uncharacterized protein (621 aa).

4 stretches are compositionally biased toward low complexity: residues 1 to 10, 63 to 79, 137 to 182, and 309 to 347; these read MIEDNINNNE, TEPL…TTPS, NNNN…NNFN, and NQSI…NNNN. Disordered stretches follow at residues 1 to 29, 63 to 100, 135 to 194, 307 to 374, 430 to 471, 492 to 539, and 594 to 614; these read MIED…DKNN, TEPL…SNKT, DDNN…KDND, KTNQ…EDDT, YNNN…IAKR, KQSQ…IKII, and PTQI…SPSK. The span at 348–357 shows a compositional bias: polar residues; that stretch reads STLTSSNSLS. 3 stretches are compositionally biased toward low complexity: residues 431-459, 496-539, and 597-613; these read NNNN…NNNN, NNNN…IKII, and INSN…SSPS.

This is an uncharacterized protein from Dictyostelium discoideum (Social amoeba).